Consider the following 67-residue polypeptide: Protein AaeX (67 aa).

Transmembrane regions (helical) follow at residues 10–30 (FGLS…LFFV) and 43–63 (FVWH…YLLF).

The protein belongs to the AaeX family.

The protein localises to the cell membrane. This Pectobacterium carotovorum subsp. carotovorum (strain PC1) protein is Protein AaeX.